We begin with the raw amino-acid sequence, 268 residues long: Tryptophan synthase alpha chain (268 aa).

Catalysis depends on proton acceptor residues Glu-49 and Asp-60.

It belongs to the TrpA family. Tetramer of two alpha and two beta chains.

It carries out the reaction (1S,2R)-1-C-(indol-3-yl)glycerol 3-phosphate + L-serine = D-glyceraldehyde 3-phosphate + L-tryptophan + H2O. Its pathway is amino-acid biosynthesis; L-tryptophan biosynthesis; L-tryptophan from chorismate: step 5/5. In terms of biological role, the alpha subunit is responsible for the aldol cleavage of indoleglycerol phosphate to indole and glyceraldehyde 3-phosphate. This chain is Tryptophan synthase alpha chain, found in Escherichia coli O7:K1 (strain IAI39 / ExPEC).